The chain runs to 111 residues: Secreted RxLR effector protein 159 (111 aa).

Positions 1 to 21 (MRGAYYVAIAFLVAASSRTAA) are cleaved as a signal peptide. The short motif at 50 to 71 (RVLRGSRDLKDKLAVYANDEQR) is the RxLR-dEER element. An N-linked (GlcNAc...) asparagine glycan is attached at Asn81.

It belongs to the RxLR effector family.

The protein localises to the secreted. It localises to the host nucleus. The protein resides in the host cytoplasm. Its function is as follows. Secreted effector that completely suppresses the host cell death induced by cell death-inducing proteins. This Plasmopara viticola (Downy mildew of grapevine) protein is Secreted RxLR effector protein 159.